A 236-amino-acid polypeptide reads, in one-letter code: Large ribosomal subunit protein uL2 (236 aa).

The tract at residues 198–236 is disordered; sequence DHPFGGGGRQHPGRPKTVSRGTPPGRKVGSIAARRTGKR.

This sequence belongs to the universal ribosomal protein uL2 family. In terms of assembly, part of the 50S ribosomal subunit. Forms a bridge to the 30S subunit in the 70S ribosome.

Its function is as follows. One of the primary rRNA binding proteins. Required for association of the 30S and 50S subunits to form the 70S ribosome, for tRNA binding and peptide bond formation. It has been suggested to have peptidyltransferase activity; this is somewhat controversial. Makes several contacts with the 16S rRNA in the 70S ribosome. The sequence is that of Large ribosomal subunit protein uL2 from Methanothrix thermoacetophila (strain DSM 6194 / JCM 14653 / NBRC 101360 / PT) (Methanosaeta thermophila).